Here is a 102-residue protein sequence, read N- to C-terminus: UPF0213 protein XCC3072 (102 aa).

The GIY-YIG domain occupies 5–80 (KPWHLYLLLC…KQQPRARKLA (76 aa)).

It belongs to the UPF0213 family.

This chain is UPF0213 protein XCC3072, found in Xanthomonas campestris pv. campestris (strain ATCC 33913 / DSM 3586 / NCPPB 528 / LMG 568 / P 25).